The sequence spans 1488 residues: Chromosome partition protein MukB (1488 aa).

34–41 (GGNGAGKS) serves as a coordination point for ATP. 3 coiled-coil regions span residues 326–418 (LEAD…QYNQ), 444–472 (LDTFQAKEQEATEKLLSLEQKMSVAQTAH), and 509–602 (RHLA…QRAP). Positions 666–783 (PGGAEDQRLN…SLPIFGRAAR (118 aa)) are flexible hinge. Coiled coils occupy residues 835–923 (EAEI…AKLE), 977–1116 (EMLS…AKAG), and 1209–1265 (VEAI…LQSV). The interval 1049-1074 (ADSGAEERARQRRDELHAQLSNNRSR) is disordered. Positions 1051-1065 (SGAEERARQRRDELH) are enriched in basic and acidic residues.

It belongs to the SMC family. MukB subfamily. In terms of assembly, homodimerization via its hinge domain. Binds to DNA via its C-terminal region. Interacts, and probably forms a ternary complex, with MukE and MukF via its C-terminal region. The complex formation is stimulated by calcium or magnesium. Interacts with tubulin-related protein FtsZ.

It localises to the cytoplasm. Its subcellular location is the nucleoid. Plays a central role in chromosome condensation, segregation and cell cycle progression. Functions as a homodimer, which is essential for chromosome partition. Involved in negative DNA supercoiling in vivo, and by this means organize and compact chromosomes. May achieve or facilitate chromosome segregation by condensation DNA from both sides of a centrally located replisome during cell division. The sequence is that of Chromosome partition protein MukB from Salmonella paratyphi A (strain ATCC 9150 / SARB42).